A 142-amino-acid chain; its full sequence is Alpha-lactalbumin (142 aa).

A signal peptide spans 1-19 (MMSFVSLLLVGILFHATQA). One can recognise a C-type lysozyme domain in the interval 20-142 (EQLTKCEVFQ…KLDQWLCEKL (123 aa)). Cystine bridges form between cysteine 25-cysteine 139, cysteine 47-cysteine 130, cysteine 80-cysteine 96, and cysteine 92-cysteine 110. Residues asparagine 64 and asparagine 93 are each glycosylated (N-linked (GlcNAc...) asparagine). Residues lysine 98, aspartate 101, aspartate 103, aspartate 106, and aspartate 107 each coordinate Ca(2+).

Belongs to the glycosyl hydrolase 22 family. In terms of assembly, lactose synthase (LS) is a heterodimer of a catalytic component, beta1,4-galactosyltransferase (beta4Gal-T1) and a regulatory component, alpha-lactalbumin (LA). In terms of tissue distribution, mammary gland specific. Secreted in milk.

It localises to the secreted. Regulatory subunit of lactose synthase, changes the substrate specificity of galactosyltransferase in the mammary gland making glucose a good acceptor substrate for this enzyme. This enables LS to synthesize lactose, the major carbohydrate component of milk. In other tissues, galactosyltransferase transfers galactose onto the N-acetylglucosamine of the oligosaccharide chains in glycoproteins. The chain is Alpha-lactalbumin (LALBA) from Capra hircus (Goat).